Reading from the N-terminus, the 57-residue chain is Potassium channel toxin alpha-KTx 26.1 (57 aa).

A signal peptide spans 1-22 (MSRLFVFILIALFLSAIIDVMS). 3 disulfide bridges follow: Cys-30–Cys-48, Cys-34–Cys-53, and Cys-38–Cys-55.

It belongs to the short scorpion toxin superfamily. Potassium channel inhibitor family. Alpha-KTx 26 subfamily. In terms of tissue distribution, expressed by the venom gland.

The protein localises to the secreted. Functionally, recombinant toxin that reversibly inhibits the potassium current of mKv1.3/KCNA3 channel stably expressed in COS7 cells (IC(50)=150 nM). Also shows a weak inhibition on Kv1.2/KCNA2, Kv1.3/KCNA3 and TRPV1 channels. This chain is Potassium channel toxin alpha-KTx 26.1, found in Olivierus martensii (Manchurian scorpion).